The following is a 388-amino-acid chain: Probable proton-coupled zinc antiporter SLC30A3 (388 aa).

Residues 1-13 are compositionally biased toward polar residues; sequence MEPSPTTGGSETT. Disordered regions lie at residues 1-30 and 35-54; these read MEPS…GLRL and TEAP…SFHH. Over 1–75 the chain is Cytoplasmic; sequence MEPSPTTGGS…TPERMQAQRQ (75 aa). Residues 76-96 traverse the membrane as a helical segment; the sequence is LCTACAVCCVFMAGEVVGGYL. The Lumenal portion of the chain corresponds to 97-105; sequence AHSLAIMTD. Residues 106 to 126 form a helical membrane-spanning segment; it reads AAHLLADVGSMMGSLFSLWLS. Residues H108 and D112 each contribute to the Zn(2+) site. Residues 127–145 lie on the Cytoplasmic side of the membrane; it reads TRPATRTMTFGWHRSETLG. The chain crosses the membrane as a helical span at residues 146–166; the sequence is ALASVVSLWMVTGILLYLAFI. Over 167-177 the chain is Lumenal; it reads RLLHSDYHIEG. Residues 178-198 form a helical membrane-spanning segment; that stretch reads GAMLLTASIAVCANLLMAFVL. Topologically, residues 199–235 are cytoplasmic; it reads HQAGPPHSHGSRGAEYAPLEEGSGEPLPLGNTSVRAA. Residues 236 to 256 form a helical membrane-spanning segment; that stretch reads FVHVLGDLLQSLGVLIASILI. Zn(2+) contacts are provided by H238 and D242. Residues 257-264 are Lumenal-facing; sequence YFKPQYKA. A helical membrane pass occupies residues 265–285; that stretch reads ADPISTFLFSICALGSTAPTL. Residues 286 to 388 are Cytoplasmic-facing; sequence RDVLRVLMEG…CLRCQEPPQA (103 aa).

Belongs to the cation diffusion facilitator (CDF) transporter (TC 2.A.4) family. SLC30A subfamily. In terms of assembly, homodimer. Homodimerization could regulate efficiency of zinc transport. Interacts with TMEM163.

Its subcellular location is the cytoplasmic vesicle. The protein resides in the secretory vesicle. It is found in the synaptic vesicle membrane. It localises to the synapse. The protein localises to the synaptosome. Its subcellular location is the late endosome membrane. The protein resides in the lysosome membrane. It carries out the reaction Zn(2+)(in) + 2 H(+)(out) = Zn(2+)(out) + 2 H(+)(in). Its function is as follows. Probable proton-coupled zinc ion antiporter mediating the import of zinc from cytoplasm into synaptic vesicles and participating to cellular zinc ion homeostasis in the brain. The sequence is that of Probable proton-coupled zinc antiporter SLC30A3 from Bos taurus (Bovine).